Consider the following 119-residue polypeptide: MARTVATFFLMLVSLACLDAIERPPQVQVYTRHPPENGKTNFLNCYVSQFHPPHIEIELLKNGKKIEKVEMSDLSFSKDWTFYLLAHTEFTPTANDKYACRVSHVTLKEPKVVTWERDM.

An N-terminal signal peptide occupies residues 1–20; it reads MARTVATFFLMLVSLACLDA. One can recognise an Ig-like C1-type domain in the interval 25-114; it reads PQVQVYTRHP…VTLKEPKVVT (90 aa). Cys-45 and Cys-100 form a disulfide bridge.

It belongs to the beta-2-microglobulin family. Heterodimer of an alpha chain and a beta chain. Beta-2-microglobulin is the beta-chain of major histocompatibility complex class I molecules.

It localises to the secreted. Its function is as follows. Component of the class I major histocompatibility complex (MHC). Involved in the presentation of peptide antigens to the immune system. This Sigmodon hispidus (Hispid cotton rat) protein is Beta-2-microglobulin (B2M).